We begin with the raw amino-acid sequence, 413 residues long: Glucose-1-phosphate adenylyltransferase (413 aa).

Alpha-D-glucose 1-phosphate-binding positions include glycine 169, 184–185, and serine 201; that span reads EK.

This sequence belongs to the bacterial/plant glucose-1-phosphate adenylyltransferase family. Homotetramer.

The enzyme catalyses alpha-D-glucose 1-phosphate + ATP + H(+) = ADP-alpha-D-glucose + diphosphate. It functions in the pathway glycan biosynthesis; glycogen biosynthesis. Functionally, involved in the biosynthesis of ADP-glucose, a building block required for the elongation reactions to produce glycogen. Catalyzes the reaction between ATP and alpha-D-glucose 1-phosphate (G1P) to produce pyrophosphate and ADP-Glc. The sequence is that of Glucose-1-phosphate adenylyltransferase from Trichlorobacter lovleyi (strain ATCC BAA-1151 / DSM 17278 / SZ) (Geobacter lovleyi).